The following is a 197-amino-acid chain: Probable GTP-binding protein EngB (197 aa).

The EngB-type G domain occupies 2 to 186 (KVKEVIFAGR…KRDLKQYLLS (185 aa)). Residues 10–17 (GRSNVGKS), 35–39 (GTTIR), 52–55 (DLPG), 132–135 (NKMD), and 166–168 (VCA) each bind GTP. The Mg(2+) site is built by Ser17 and Thr37.

This sequence belongs to the TRAFAC class TrmE-Era-EngA-EngB-Septin-like GTPase superfamily. EngB GTPase family. The cofactor is Mg(2+).

Its function is as follows. Necessary for normal cell division and for the maintenance of normal septation. This is Probable GTP-binding protein EngB from Archaeoglobus fulgidus (strain ATCC 49558 / DSM 4304 / JCM 9628 / NBRC 100126 / VC-16).